A 128-amino-acid chain; its full sequence is Probable 4-amino-4-deoxy-L-arabinose-phosphoundecaprenol flippase subunit ArnF (128 aa).

Over 1–2 the chain is Cytoplasmic; sequence MG. A helical transmembrane segment spans residues 3–23; it reads LMWGLFSVIIASAAQLSLGFA. Over 24–35 the chain is Periplasmic; the sequence is ASHLPPMTHLWD. A helical membrane pass occupies residues 36-56; that stretch reads FIAALLAFGLDARILLLGLLG. The Cytoplasmic portion of the chain corresponds to 57–76; sequence YLLSVFCWYKTLHKLALSKA. Residues 77–97 traverse the membrane as a helical segment; it reads YALLSMSYVLVWIASMILPGW. The Periplasmic segment spans residues 98–100; it reads EGT. Residues 101–121 traverse the membrane as a helical segment; the sequence is FSLKALLGVACIMSGLMLIFL. Topologically, residues 122-128 are cytoplasmic; sequence PTTKQRY.

It belongs to the ArnF family. As to quaternary structure, heterodimer of ArnE and ArnF.

It localises to the cell inner membrane. It functions in the pathway bacterial outer membrane biogenesis; lipopolysaccharide biosynthesis. Translocates 4-amino-4-deoxy-L-arabinose-phosphoundecaprenol (alpha-L-Ara4N-phosphoundecaprenol) from the cytoplasmic to the periplasmic side of the inner membrane. In Escherichia coli O17:K52:H18 (strain UMN026 / ExPEC), this protein is Probable 4-amino-4-deoxy-L-arabinose-phosphoundecaprenol flippase subunit ArnF.